Consider the following 90-residue polypeptide: WAP four-disulfide core domain protein 12 (90 aa).

Positions 1 to 23 (MGSSSFLVLMVSLALVTLVAVEG) are cleaved as a signal peptide. In terms of domain architecture, WAP spans 27-74 (GIEKAGVCPADNVRCFKSDPPQCHTDQDCLGERKCCYLHCGFKCVIPV). Cystine bridges form between Cys-34/Cys-62, Cys-41/Cys-66, Cys-49/Cys-61, and Cys-55/Cys-70.

It is found in the secreted. Its function is as follows. Antibacterial protein. Putative acid-stable proteinase inhibitor. This chain is WAP four-disulfide core domain protein 12 (WFDC12), found in Gorilla gorilla gorilla (Western lowland gorilla).